The primary structure comprises 151 residues: Protein ECM12 (151 aa).

The N-linked (GlcNAc...) asparagine glycan is linked to Asn2. 2 helical membrane passes run Leu17–Phe37 and Ala51–Phe71. N-linked (GlcNAc...) asparagine glycosylation is found at Asn132 and Asn137.

It is found in the membrane. Its function is as follows. May be involved in cell wall organization and biogenesis. The chain is Protein ECM12 (ECM12) from Saccharomyces cerevisiae (strain ATCC 204508 / S288c) (Baker's yeast).